Here is a 270-residue protein sequence, read N- to C-terminus: MSMQTAPIKKTTLNHLQAKKNQEKIIAITAYDALFAQIFDPLVDVILVGDSLNMSFFNQNDTLSASVEMMLYHTKAVCAGAKTPFIITDMPFGSYKDEKTALKNAIRVYKETQASAIKLEGGKEKAKLVKTLTNEGVIVVGHIGLMPQFVRLDGGYKIKGKNEEQQKKLLEDALSLEEAGVGLLVLEGITTPIAQTITQKIKIPTIGIGSGKDCDGQILVWSDMLGFFDSFKPKFVREYLKGKELVQNAIKQYADDVKKGNFPNELESYH.

The Mg(2+) site is built by Asp50 and Asp89. Residues 50–51 (DS), Asp89, and Lys118 each bind 3-methyl-2-oxobutanoate. Glu120 serves as a coordination point for Mg(2+). Glu187 serves as the catalytic Proton acceptor.

It belongs to the PanB family. In terms of assembly, homodecamer; pentamer of dimers. It depends on Mg(2+) as a cofactor.

It localises to the cytoplasm. It carries out the reaction 3-methyl-2-oxobutanoate + (6R)-5,10-methylene-5,6,7,8-tetrahydrofolate + H2O = 2-dehydropantoate + (6S)-5,6,7,8-tetrahydrofolate. It functions in the pathway cofactor biosynthesis; (R)-pantothenate biosynthesis; (R)-pantoate from 3-methyl-2-oxobutanoate: step 1/2. Functionally, catalyzes the reversible reaction in which hydroxymethyl group from 5,10-methylenetetrahydrofolate is transferred onto alpha-ketoisovalerate to form ketopantoate. This Helicobacter pylori (strain G27) protein is 3-methyl-2-oxobutanoate hydroxymethyltransferase.